The primary structure comprises 231 residues: Orotidine 5'-phosphate decarboxylase (231 aa).

Substrate-binding positions include D11, K33, 60 to 69 (DLKLHDIPNT), T117, R179, Q187, G207, and R208. The active-site Proton donor is K62.

The protein belongs to the OMP decarboxylase family. Type 1 subfamily. Homodimer.

The catalysed reaction is orotidine 5'-phosphate + H(+) = UMP + CO2. It participates in pyrimidine metabolism; UMP biosynthesis via de novo pathway; UMP from orotate: step 2/2. Its function is as follows. Catalyzes the decarboxylation of orotidine 5'-monophosphate (OMP) to uridine 5'-monophosphate (UMP). The protein is Orotidine 5'-phosphate decarboxylase of Ehrlichia chaffeensis (strain ATCC CRL-10679 / Arkansas).